The primary structure comprises 180 residues: UPF0102 protein Tery_0733 (180 aa).

It belongs to the UPF0102 family.

The polypeptide is UPF0102 protein Tery_0733 (Trichodesmium erythraeum (strain IMS101)).